A 1388-amino-acid chain; its full sequence is DNA-directed RNA polymerase subunit beta (1388 aa).

Belongs to the RNA polymerase beta chain family. The RNAP catalytic core consists of 2 alpha, 1 beta, 1 beta' and 1 omega subunit. When a sigma factor is associated with the core the holoenzyme is formed, which can initiate transcription.

It carries out the reaction RNA(n) + a ribonucleoside 5'-triphosphate = RNA(n+1) + diphosphate. DNA-dependent RNA polymerase catalyzes the transcription of DNA into RNA using the four ribonucleoside triphosphates as substrates. This chain is DNA-directed RNA polymerase subunit beta, found in Xylella fastidiosa (strain 9a5c).